The sequence spans 247 residues: uncharacterized protein (247 aa).

Residues 1–35 form the signal peptide; sequence MWGPGVTAEGLSVAPAPPPLLPLLLLLALALVAPS. A helical transmembrane segment spans residues 82–102; that stretch reads LSGLLILLVLFAIGYFLQRII. A disordered region spans residues 109 to 176; the sequence is YPRGQARPGQ…RGSGGRLPPS (68 aa). Positions 111–120 are enriched in low complexity; it reads RGQARPGQAR. The segment covering 161-171 has biased composition (gly residues); that stretch reads SGGGRGRGSGG.

The protein resides in the membrane. This is an uncharacterized protein from Mus musculus (Mouse).